A 266-amino-acid chain; its full sequence is Undecaprenyl-diphosphatase (266 aa).

Transmembrane regions (helical) follow at residues 3-23 (MSLL…FLPV), 41-61 (GTET…VVLY), 86-106 (VLVG…AIKA), 108-128 (LNTP…ILVI), 149-171 (FGVG…ATIM), 184-204 (AEYS…LALW), 220-240 (IGFV…LGVV), and 245-265 (FAPF…WLLA).

The protein belongs to the UppP family.

It localises to the cell inner membrane. It catalyses the reaction di-trans,octa-cis-undecaprenyl diphosphate + H2O = di-trans,octa-cis-undecaprenyl phosphate + phosphate + H(+). Functionally, catalyzes the dephosphorylation of undecaprenyl diphosphate (UPP). Confers resistance to bacitracin. This chain is Undecaprenyl-diphosphatase, found in Rhizorhabdus wittichii (strain DSM 6014 / CCUG 31198 / JCM 15750 / NBRC 105917 / EY 4224 / RW1) (Sphingomonas wittichii).